The chain runs to 361 residues: tRNA N6-adenosine threonylcarbamoyltransferase (361 aa).

Residues His-110 and His-114 each coordinate Fe cation. Residues 132–136 (LVSGG), Asp-165, Gly-178, Asp-182, and Asn-289 each bind substrate. Asp-317 contributes to the Fe cation binding site.

It belongs to the KAE1 / TsaD family. Fe(2+) serves as cofactor.

It is found in the cytoplasm. It catalyses the reaction L-threonylcarbamoyladenylate + adenosine(37) in tRNA = N(6)-L-threonylcarbamoyladenosine(37) in tRNA + AMP + H(+). Functionally, required for the formation of a threonylcarbamoyl group on adenosine at position 37 (t(6)A37) in tRNAs that read codons beginning with adenine. Is involved in the transfer of the threonylcarbamoyl moiety of threonylcarbamoyl-AMP (TC-AMP) to the N6 group of A37, together with TsaE and TsaB. TsaD likely plays a direct catalytic role in this reaction. The protein is tRNA N6-adenosine threonylcarbamoyltransferase of Nitratidesulfovibrio vulgaris (strain ATCC 29579 / DSM 644 / CCUG 34227 / NCIMB 8303 / VKM B-1760 / Hildenborough) (Desulfovibrio vulgaris).